The following is a 369-amino-acid chain: 3-dehydroquinate synthase (369 aa).

NAD(+) contacts are provided by residues 75 to 80 (DGEEHK), 109 to 113 (GVIGD), 133 to 134 (TT), lysine 146, lysine 155, and 173 to 176 (TLKT). The Zn(2+) site is built by glutamate 188, histidine 251, and histidine 268.

The protein belongs to the sugar phosphate cyclases superfamily. Dehydroquinate synthase family. Co(2+) serves as cofactor. Zn(2+) is required as a cofactor. Requires NAD(+) as cofactor.

It localises to the cytoplasm. The enzyme catalyses 7-phospho-2-dehydro-3-deoxy-D-arabino-heptonate = 3-dehydroquinate + phosphate. It participates in metabolic intermediate biosynthesis; chorismate biosynthesis; chorismate from D-erythrose 4-phosphate and phosphoenolpyruvate: step 2/7. In terms of biological role, catalyzes the conversion of 3-deoxy-D-arabino-heptulosonate 7-phosphate (DAHP) to dehydroquinate (DHQ). The polypeptide is 3-dehydroquinate synthase (Legionella pneumophila subsp. pneumophila (strain Philadelphia 1 / ATCC 33152 / DSM 7513)).